A 277-amino-acid chain; its full sequence is Hydroxyethylthiazole kinase (277 aa).

Residue Met55 coordinates substrate. Positions 130 and 176 each coordinate ATP. Gly203 lines the substrate pocket.

It belongs to the Thz kinase family. Requires Mg(2+) as cofactor.

The catalysed reaction is 5-(2-hydroxyethyl)-4-methylthiazole + ATP = 4-methyl-5-(2-phosphooxyethyl)-thiazole + ADP + H(+). The protein operates within cofactor biosynthesis; thiamine diphosphate biosynthesis; 4-methyl-5-(2-phosphoethyl)-thiazole from 5-(2-hydroxyethyl)-4-methylthiazole: step 1/1. Catalyzes the phosphorylation of the hydroxyl group of 4-methyl-5-beta-hydroxyethylthiazole (THZ). This is Hydroxyethylthiazole kinase from Cutibacterium acnes (strain DSM 16379 / KPA171202) (Propionibacterium acnes).